Reading from the N-terminus, the 187-residue chain is MIEYVRGIIEDIGQDYVVIDFMGIGIKVFVPFSTLKVLPSKGNITKLYTYLQVREDGFQIFGFKTKEELDLFEKLLSVSGVGPKGALSILSVVSIDNFVKAVNAGDYKALTVAPGIGKKTAERIILELKDKLPKEIVFEGDNNFSNEALEALLALGYTKSEAIYALADITCDSVEDAVKQALKKLMK.

The interval 1 to 64 (MIEYVRGIIE…EDGFQIFGFK (64 aa)) is domain I. Residues 65 to 136 (TKEELDLFEK…ELKDKLPKEI (72 aa)) are domain II. Residues 136–139 (IVFE) are flexible linker. The tract at residues 140–187 (GDNNFSNEALEALLALGYTKSEAIYALADITCDSVEDAVKQALKKLMK) is domain III.

This sequence belongs to the RuvA family. In terms of assembly, homotetramer. Forms an RuvA(8)-RuvB(12)-Holliday junction (HJ) complex. HJ DNA is sandwiched between 2 RuvA tetramers; dsDNA enters through RuvA and exits via RuvB. An RuvB hexamer assembles on each DNA strand where it exits the tetramer. Each RuvB hexamer is contacted by two RuvA subunits (via domain III) on 2 adjacent RuvB subunits; this complex drives branch migration. In the full resolvosome a probable DNA-RuvA(4)-RuvB(12)-RuvC(2) complex forms which resolves the HJ.

The protein localises to the cytoplasm. Its function is as follows. The RuvA-RuvB-RuvC complex processes Holliday junction (HJ) DNA during genetic recombination and DNA repair, while the RuvA-RuvB complex plays an important role in the rescue of blocked DNA replication forks via replication fork reversal (RFR). RuvA specifically binds to HJ cruciform DNA, conferring on it an open structure. The RuvB hexamer acts as an ATP-dependent pump, pulling dsDNA into and through the RuvAB complex. HJ branch migration allows RuvC to scan DNA until it finds its consensus sequence, where it cleaves and resolves the cruciform DNA. The polypeptide is Holliday junction branch migration complex subunit RuvA (Thermoanaerobacter pseudethanolicus (strain ATCC 33223 / 39E) (Clostridium thermohydrosulfuricum)).